The primary structure comprises 120 residues: Large ribosomal subunit protein uL24 (120 aa).

The protein belongs to the universal ribosomal protein uL24 family. As to quaternary structure, part of the 50S ribosomal subunit.

In terms of biological role, one of two assembly initiator proteins, it binds directly to the 5'-end of the 23S rRNA, where it nucleates assembly of the 50S subunit. One of the proteins that surrounds the polypeptide exit tunnel on the outside of the subunit. This is Large ribosomal subunit protein uL24 from Pseudarthrobacter chlorophenolicus (strain ATCC 700700 / DSM 12829 / CIP 107037 / JCM 12360 / KCTC 9906 / NCIMB 13794 / A6) (Arthrobacter chlorophenolicus).